We begin with the raw amino-acid sequence, 93 residues long: uncharacterized protein (93 aa).

This is an uncharacterized protein from Saimiriine herpesvirus 2 (strain 11) (SaHV-2).